Consider the following 397-residue polypeptide: Ribosomal RNA large subunit methyltransferase I (397 aa).

Positions 2–80 (AIRIKLKPGR…KEETIDADFF (79 aa)) constitute a PUA domain.

The protein belongs to the methyltransferase superfamily. RlmI family.

It is found in the cytoplasm. It carries out the reaction cytidine(1962) in 23S rRNA + S-adenosyl-L-methionine = 5-methylcytidine(1962) in 23S rRNA + S-adenosyl-L-homocysteine + H(+). In terms of biological role, specifically methylates the cytosine at position 1962 (m5C1962) of 23S rRNA. The protein is Ribosomal RNA large subunit methyltransferase I of Shewanella frigidimarina (strain NCIMB 400).